A 105-amino-acid chain; its full sequence is Small ribosomal subunit protein uS10 (105 aa).

It belongs to the universal ribosomal protein uS10 family. In terms of assembly, part of the 30S ribosomal subunit.

Its function is as follows. Involved in the binding of tRNA to the ribosomes. This is Small ribosomal subunit protein uS10 from Oleidesulfovibrio alaskensis (strain ATCC BAA-1058 / DSM 17464 / G20) (Desulfovibrio alaskensis).